The following is a 616-amino-acid chain: Chaperone protein HscA (616 aa).

This sequence belongs to the heat shock protein 70 family.

Chaperone involved in the maturation of iron-sulfur cluster-containing proteins. Has a low intrinsic ATPase activity which is markedly stimulated by HscB. Involved in the maturation of IscU. The sequence is that of Chaperone protein HscA from Escherichia coli O139:H28 (strain E24377A / ETEC).